The following is a 232-amino-acid chain: Phosphoglycolate phosphatase (232 aa).

Asp-8 acts as the Nucleophile in catalysis. Positions 8 and 10 each coordinate Mg(2+). Residue Lys-156 participates in substrate binding. Mg(2+)-binding residues include Asp-179 and Asp-183.

The protein belongs to the archaeal SPP-like hydrolase family. Mg(2+) serves as cofactor.

The catalysed reaction is 2-phosphoglycolate + H2O = glycolate + phosphate. Its function is as follows. Catalyzes the dephosphorylation of 2-phosphoglycolate. The chain is Phosphoglycolate phosphatase from Methanopyrus kandleri (strain AV19 / DSM 6324 / JCM 9639 / NBRC 100938).